A 130-amino-acid polypeptide reads, in one-letter code: Small ribosomal subunit protein uS9 (130 aa).

The protein belongs to the universal ribosomal protein uS9 family.

This Pasteurella multocida (strain Pm70) protein is Small ribosomal subunit protein uS9.